Here is a 131-residue protein sequence, read N- to C-terminus: Small ribosomal subunit protein uS11 (131 aa).

Belongs to the universal ribosomal protein uS11 family. Part of the 30S ribosomal subunit. Interacts with proteins S7 and S18. Binds to IF-3.

In terms of biological role, located on the platform of the 30S subunit, it bridges several disparate RNA helices of the 16S rRNA. Forms part of the Shine-Dalgarno cleft in the 70S ribosome. The polypeptide is Small ribosomal subunit protein uS11 (Wigglesworthia glossinidia brevipalpis).